Consider the following 273-residue polypeptide: 4-hydroxy-tetrahydrodipicolinate reductase (273 aa).

Residues 12 to 17 (GAGGRM) and glutamate 38 each bind NAD(+). Arginine 39 is a binding site for NADP(+). NAD(+) contacts are provided by residues 102-104 (GTT) and 126-129 (AANF). The active-site Proton donor/acceptor is the histidine 159. Histidine 160 is a binding site for (S)-2,3,4,5-tetrahydrodipicolinate. Lysine 163 functions as the Proton donor in the catalytic mechanism. 169-170 (GT) contributes to the (S)-2,3,4,5-tetrahydrodipicolinate binding site.

This sequence belongs to the DapB family. As to quaternary structure, homotetramer.

The protein resides in the cytoplasm. It catalyses the reaction (S)-2,3,4,5-tetrahydrodipicolinate + NAD(+) + H2O = (2S,4S)-4-hydroxy-2,3,4,5-tetrahydrodipicolinate + NADH + H(+). The enzyme catalyses (S)-2,3,4,5-tetrahydrodipicolinate + NADP(+) + H2O = (2S,4S)-4-hydroxy-2,3,4,5-tetrahydrodipicolinate + NADPH + H(+). The protein operates within amino-acid biosynthesis; L-lysine biosynthesis via DAP pathway; (S)-tetrahydrodipicolinate from L-aspartate: step 4/4. Catalyzes the conversion of 4-hydroxy-tetrahydrodipicolinate (HTPA) to tetrahydrodipicolinate. The protein is 4-hydroxy-tetrahydrodipicolinate reductase of Yersinia pseudotuberculosis serotype O:1b (strain IP 31758).